The sequence spans 116 residues: Tachykinin-3 (116 aa).

The first 20 residues, 1-20 (MRSAMLFAAVLALSLAWTFG), serve as a signal peptide directing secretion. Residues 21-79 (AVCEEPQGQGGRLSKDSDLYQLPPSLLRRLYDSRPVSLEGLLKVLSKASVGPKETSLPQ) constitute a propeptide that is removed on maturation. At Met-91 the chain carries Methionine amide. The segment at 93–116 (KRNSQPDTPTDVVEENTPSFGILK) is disordered. A propeptide spanning residues 95–116 (NSQPDTPTDVVEENTPSFGILK) is cleaved from the precursor.

The protein belongs to the tachykinin family.

Its subcellular location is the secreted. Functionally, tachykinins are active peptides which excite neurons, evoke behavioral responses, are potent vasodilators and secretagogues, and contract (directly or indirectly) many smooth muscles. Is a critical central regulator of gonadal function. This Mus musculus (Mouse) protein is Tachykinin-3 (Tac3).